The chain runs to 342 residues: Uricase (342 aa).

Catalysis depends on charge relay system residues lysine 35 and threonine 80. The urate site is built by threonine 80, aspartate 81, phenylalanine 204, arginine 221, valine 269, glutamine 270, and asparagine 296. Catalysis depends on histidine 298, which acts as the Charge relay system. The Microbody targeting signal signature appears at 340–342 (SHL).

This sequence belongs to the uricase family. As to expression, malpighian tubules.

It localises to the peroxisome. It catalyses the reaction urate + O2 + H2O = 5-hydroxyisourate + H2O2. Its pathway is purine metabolism; urate degradation; (S)-allantoin from urate: step 1/3. With respect to regulation, repressed by 20-hydroxyecdysone. Catalyzes the oxidation of uric acid to 5-hydroxyisourate, which is further processed to form (S)-allantoin. In Drosophila virilis (Fruit fly), this protein is Uricase (Uro).